The sequence spans 209 residues: Large ribosomal subunit protein uL3 (209 aa).

It belongs to the universal ribosomal protein uL3 family. As to quaternary structure, part of the 50S ribosomal subunit. Forms a cluster with proteins L14 and L19.

In terms of biological role, one of the primary rRNA binding proteins, it binds directly near the 3'-end of the 23S rRNA, where it nucleates assembly of the 50S subunit. In Lactiplantibacillus plantarum (strain ATCC BAA-793 / NCIMB 8826 / WCFS1) (Lactobacillus plantarum), this protein is Large ribosomal subunit protein uL3.